Consider the following 244-residue polypeptide: Geranylgeranylglyceryl phosphate synthase (244 aa).

Mg(2+) contacts are provided by Asp20 and Ser49. Sn-glycerol 1-phosphate is bound by residues 169-175 (YLEAGSG), 200-201 (GG), and 222-223 (GT).

Belongs to the GGGP/HepGP synthase family. Group II subfamily. The cofactor is Mg(2+).

It localises to the cytoplasm. It catalyses the reaction sn-glycerol 1-phosphate + (2E,6E,10E)-geranylgeranyl diphosphate = sn-3-O-(geranylgeranyl)glycerol 1-phosphate + diphosphate. The protein operates within membrane lipid metabolism; glycerophospholipid metabolism. Prenyltransferase that catalyzes the transfer of the geranylgeranyl moiety of geranylgeranyl diphosphate (GGPP) to the C3 hydroxyl of sn-glycerol-1-phosphate (G1P). This reaction is the first ether-bond-formation step in the biosynthesis of archaeal membrane lipids. This is Geranylgeranylglyceryl phosphate synthase from Korarchaeum cryptofilum (strain OPF8).